Consider the following 377-residue polypeptide: Dual-specificity RNA methyltransferase RlmN (377 aa).

The active-site Proton acceptor is Glu-102. Residues 108–345 (EPDRRTLCVS…AVVRKNRGGD (238 aa)) enclose the Radical SAM core domain. A disulfide bridge connects residues Cys-115 and Cys-350. 3 residues coordinate [4Fe-4S] cluster: Cys-122, Cys-126, and Cys-129. S-adenosyl-L-methionine-binding positions include 177-178 (GE), Ser-209, 231-233 (SLN), and Asn-307. Cys-350 serves as the catalytic S-methylcysteine intermediate. Residues 354-377 (AAEGGPGDPRRPAPPPLTRLPAAG) form a disordered region.

It belongs to the radical SAM superfamily. RlmN family. [4Fe-4S] cluster serves as cofactor.

Its subcellular location is the cytoplasm. The enzyme catalyses adenosine(2503) in 23S rRNA + 2 reduced [2Fe-2S]-[ferredoxin] + 2 S-adenosyl-L-methionine = 2-methyladenosine(2503) in 23S rRNA + 5'-deoxyadenosine + L-methionine + 2 oxidized [2Fe-2S]-[ferredoxin] + S-adenosyl-L-homocysteine. The catalysed reaction is adenosine(37) in tRNA + 2 reduced [2Fe-2S]-[ferredoxin] + 2 S-adenosyl-L-methionine = 2-methyladenosine(37) in tRNA + 5'-deoxyadenosine + L-methionine + 2 oxidized [2Fe-2S]-[ferredoxin] + S-adenosyl-L-homocysteine. Functionally, specifically methylates position 2 of adenine 2503 in 23S rRNA and position 2 of adenine 37 in tRNAs. m2A2503 modification seems to play a crucial role in the proofreading step occurring at the peptidyl transferase center and thus would serve to optimize ribosomal fidelity. This chain is Dual-specificity RNA methyltransferase RlmN, found in Anaeromyxobacter sp. (strain Fw109-5).